Reading from the N-terminus, the 414-residue chain is Protein DNA-DAMAGE INDUCIBLE 1 (414 aa).

One can recognise a Ubiquitin-like domain in the interval 1 to 76 (MRITVMTAGE…LMMMVSNASS (76 aa)). The Peptidase A2 domain maps to 213–292 (LKAFVDSGAQ…NMEFLFGLDM (80 aa)). The active site involves D218. The disordered stretch occupies residues 332–374 (ERVPNDASSSGATVPSGFTEKKNNTVANPTSQQPKRQNTSEGP). The segment covering 355 to 372 (NTVANPTSQQPKRQNTSE) has biased composition (polar residues). One can recognise a UBA domain in the interval 374–414 (PEFEAKIAKLVELGFSRDSVIQALKLFEGNEEQAAGFLFGG).

The protein belongs to the DDI1 family. In terms of assembly, homodimer.

Its subcellular location is the cytoplasm. The protein localises to the cytosol. In terms of biological role, receptor of ubiquitinated protein targeted to ubiquitin/proteasome-mediated proteolysis (UPP). Relatively weak affinity for both 'Lys-48'- and 'Lys-63'-linked ubiquitin chains with a slight preference for 'Lys-48-'linked chains of three or more ubiquitin units. This chain is Protein DNA-DAMAGE INDUCIBLE 1, found in Arabidopsis thaliana (Mouse-ear cress).